A 292-amino-acid chain; its full sequence is Ribosomal protein L11 methyltransferase (292 aa).

S-adenosyl-L-methionine is bound by residues threonine 144, glycine 165, aspartate 187, and asparagine 229.

The protein belongs to the methyltransferase superfamily. PrmA family.

The protein resides in the cytoplasm. It carries out the reaction L-lysyl-[protein] + 3 S-adenosyl-L-methionine = N(6),N(6),N(6)-trimethyl-L-lysyl-[protein] + 3 S-adenosyl-L-homocysteine + 3 H(+). Functionally, methylates ribosomal protein L11. In Pseudomonas fluorescens (strain SBW25), this protein is Ribosomal protein L11 methyltransferase.